Here is a 299-residue protein sequence, read N- to C-terminus: Oxygen-dependent coproporphyrinogen-III oxidase (299 aa).

Substrate is bound at residue Ser-92. Positions 96 and 106 each coordinate a divalent metal cation. His-106 serves as the catalytic Proton donor. 108–110 contributes to the substrate binding site; the sequence is NVR. Residues His-145 and His-175 each contribute to the a divalent metal cation site. The segment at 240–275 is important for dimerization; sequence YVEFNLVWDRGTLFGLQTGGRTESILMSMPPLVRWE. 258–260 contacts substrate; that stretch reads GGR.

The protein belongs to the aerobic coproporphyrinogen-III oxidase family. In terms of assembly, homodimer. A divalent metal cation serves as cofactor.

The protein localises to the cytoplasm. It catalyses the reaction coproporphyrinogen III + O2 + 2 H(+) = protoporphyrinogen IX + 2 CO2 + 2 H2O. It participates in porphyrin-containing compound metabolism; protoporphyrin-IX biosynthesis; protoporphyrinogen-IX from coproporphyrinogen-III (O2 route): step 1/1. In terms of biological role, involved in the heme biosynthesis. Catalyzes the aerobic oxidative decarboxylation of propionate groups of rings A and B of coproporphyrinogen-III to yield the vinyl groups in protoporphyrinogen-IX. This chain is Oxygen-dependent coproporphyrinogen-III oxidase, found in Enterobacter sp. (strain 638).